The sequence spans 1189 residues: Pesticidal crystal protein Cry1Ca (1189 aa).

The protein belongs to the delta endotoxin family.

Promotes colloidosmotic lysis by binding to the midgut epithelial cells of many lepidopteran larvae including Spodoptera species. The chain is Pesticidal crystal protein Cry1Ca (cry1Ca) from Bacillus thuringiensis subsp. aizawai.